The primary structure comprises 406 residues: Cytochrome bc1 complex Rieske iron-sulfur subunit (406 aa).

Helical transmembrane passes span 56-76 (VGIWFGIGIVSALAFLAVYLF), 98-118 (LLGLTSGLAILSLGIGVIFYI), and 166-186 (MLGIGGVLAGLTIIAPLGGMV). A Rieske domain is found at 291–388 (HGPRNAVMLI…ITVDEEGYLV (98 aa)). The [2Fe-2S] cluster site is built by Cys-331, His-333, Cys-350, and His-353. Residues Cys-336 and Cys-352 are joined by a disulfide bond.

This sequence belongs to the Rieske iron-sulfur protein family. In terms of assembly, the cytochrome bc1 complex is composed of a cytochrome b (QcrB), the Rieske iron-sulfur protein (QcrA) and a diheme cytochrome c (QcrC) subunit. The bc1 complex forms a supercomplex with cytochrome c oxidase (cytochrome aa3). [2Fe-2S] cluster is required as a cofactor.

Its subcellular location is the cell membrane. Functionally, iron-sulfur subunit of the cytochrome bc1 complex, an essential component of the respiratory electron transport chain required for ATP synthesis. The bc1 complex catalyzes the oxidation of menaquinol and the reduction of cytochrome c in the respiratory chain. The bc1 complex operates through a Q-cycle mechanism that couples electron transfer to generation of the proton gradient that drives ATP synthesis. The chain is Cytochrome bc1 complex Rieske iron-sulfur subunit (qcrA) from Corynebacterium diphtheriae (strain ATCC 700971 / NCTC 13129 / Biotype gravis).